Consider the following 354-residue polypeptide: Methylthioribose-1-phosphate isomerase (354 aa).

Aspartate 246 serves as the catalytic Proton donor.

It belongs to the eIF-2B alpha/beta/delta subunits family. MtnA subfamily.

The protein resides in the cytoplasm. The protein localises to the nucleus. It carries out the reaction 5-(methylsulfanyl)-alpha-D-ribose 1-phosphate = 5-(methylsulfanyl)-D-ribulose 1-phosphate. The protein operates within amino-acid biosynthesis; L-methionine biosynthesis via salvage pathway; L-methionine from S-methyl-5-thio-alpha-D-ribose 1-phosphate: step 1/6. Its function is as follows. Catalyzes the interconversion of methylthioribose-1-phosphate (MTR-1-P) into methylthioribulose-1-phosphate (MTRu-1-P). The polypeptide is Methylthioribose-1-phosphate isomerase (mri1) (Xenopus tropicalis (Western clawed frog)).